A 430-amino-acid polypeptide reads, in one-letter code: Dihydrolipoyllysine-residue acetyltransferase component of pyruvate dehydrogenase complex (430 aa).

The 76-residue stretch at 2–77 (AFEFRLPDIG…VVGDVIVKID (76 aa)) folds into the Lipoyl-binding domain. An N6-lipoyllysine modification is found at lysine 43. The interval 80-122 (DAEDMQFKGHDDDSSSKEEPAKEEAPAEQAPVATQTEEVDENR) is disordered. Residues 84 to 104 (MQFKGHDDDSSSKEEPAKEEA) are compositionally biased toward basic and acidic residues. A Peripheral subunit-binding (PSBD) domain is found at 125–162 (KAMPSVRKYAREKGVNIKAVSGSGKNGRITKEDVDAYL). Positions 165-199 (GAPTASNESAASATNEEVAETPAAPAAVSLEGDFP) are disordered. Residues 168–192 (TASNESAASATNEEVAETPAAPAAV) show a composition bias toward low complexity. Histidine 401 is a catalytic residue.

The protein belongs to the 2-oxoacid dehydrogenase family. In terms of assembly, forms a 24-polypeptide structural core with octahedral symmetry. (R)-lipoate is required as a cofactor.

It catalyses the reaction N(6)-[(R)-dihydrolipoyl]-L-lysyl-[protein] + acetyl-CoA = N(6)-[(R)-S(8)-acetyldihydrolipoyl]-L-lysyl-[protein] + CoA. The pyruvate dehydrogenase complex catalyzes the overall conversion of pyruvate to acetyl-CoA and CO(2). It contains multiple copies of three enzymatic components: pyruvate dehydrogenase (E1), dihydrolipoamide acetyltransferase (E2) and lipoamide dehydrogenase (E3). The polypeptide is Dihydrolipoyllysine-residue acetyltransferase component of pyruvate dehydrogenase complex (pdhC) (Staphylococcus aureus (strain MRSA252)).